The primary structure comprises 283 residues: Nucleotide-binding protein THEYE_A0235 (283 aa).

Gly12 to Thr19 serves as a coordination point for ATP. Asp62–Val65 contacts GTP.

The protein belongs to the RapZ-like family.

Functionally, displays ATPase and GTPase activities. The chain is Nucleotide-binding protein THEYE_A0235 from Thermodesulfovibrio yellowstonii (strain ATCC 51303 / DSM 11347 / YP87).